The sequence spans 803 residues: Xylosyltransferase sqv-6 (803 aa).

The Cytoplasmic portion of the chain corresponds to 3-13; it reads VVGGVNTNYRH. Residues 14 to 34 form a helical; Signal-anchor for type II membrane protein membrane-spanning segment; that stretch reads YALVIVLFFFLNVYLLYSAQN. Residues 35 to 803 lie on the Lumenal side of the membrane; the sequence is SVQIRKDEGE…GWDEEARILR (769 aa). Cys-63 and Cys-91 are joined by a disulfide. Residues Asn-95, Asn-175, and Asn-224 are each glycosylated (N-linked (GlcNAc...) asparagine). Cystine bridges form between Cys-107–Cys-446, Cys-465–Cys-479, and Cys-467–Cys-477. The WSC domain maps to 115-209; it reads IDQRIGCFLD…FNAVEIFRTD (95 aa). UDP-alpha-D-xylose is bound by residues Asp-265 and 294-296; that span reads TIW. A glycan (N-linked (GlcNAc...) asparagine) is linked at Asn-326. 399-400 is a binding site for UDP-alpha-D-xylose; it reads DW. UDP-alpha-D-xylose is bound by residues Ser-480 and 506 to 507; that span reads RK. Asn-615 and Asn-718 each carry an N-linked (GlcNAc...) asparagine glycan. A disulfide bond links Cys-769 and Cys-775.

It belongs to the glycosyltransferase 14 family. XylT subfamily. Requires a divalent metal cation as cofactor.

Its subcellular location is the endoplasmic reticulum membrane. It localises to the golgi apparatus membrane. It carries out the reaction UDP-alpha-D-xylose + L-seryl-[protein] = 3-O-(beta-D-xylosyl)-L-seryl-[protein] + UDP + H(+). The protein operates within glycan metabolism; chondroitin sulfate biosynthesis. Its pathway is glycan metabolism; heparan sulfate biosynthesis. In terms of biological role, catalyzes the first step in biosynthesis of glycosaminoglycan. Transfers D-xylose from UDP-D-xylose to specific serine residues of the core protein. The polypeptide is Xylosyltransferase sqv-6 (Caenorhabditis briggsae).